Reading from the N-terminus, the 360-residue chain is S-adenosylmethionine:tRNA ribosyltransferase-isomerase (360 aa).

This sequence belongs to the QueA family. In terms of assembly, monomer.

It localises to the cytoplasm. The catalysed reaction is 7-aminomethyl-7-carbaguanosine(34) in tRNA + S-adenosyl-L-methionine = epoxyqueuosine(34) in tRNA + adenine + L-methionine + 2 H(+). The protein operates within tRNA modification; tRNA-queuosine biosynthesis. Functionally, transfers and isomerizes the ribose moiety from AdoMet to the 7-aminomethyl group of 7-deazaguanine (preQ1-tRNA) to give epoxyqueuosine (oQ-tRNA). The sequence is that of S-adenosylmethionine:tRNA ribosyltransferase-isomerase from Burkholderia pseudomallei (strain K96243).